The sequence spans 508 residues: Maturase K (508 aa).

This sequence belongs to the intron maturase 2 family. MatK subfamily.

It is found in the plastid. The protein resides in the chloroplast. Usually encoded in the trnK tRNA gene intron. Probably assists in splicing its own and other chloroplast group II introns. This Abrus precatorius (Indian licorice) protein is Maturase K.